The sequence spans 339 residues: Serine/threonine-protein kinase pdik1l-A (339 aa).

The region spanning Tyr-8–Phe-332 is the Protein kinase domain. Residues Val-14–Val-22 and Lys-37 each bind ATP. Asp-164 serves as the catalytic Proton acceptor.

The protein belongs to the protein kinase superfamily. Ser/Thr protein kinase family.

The protein resides in the nucleus. It carries out the reaction L-seryl-[protein] + ATP = O-phospho-L-seryl-[protein] + ADP + H(+). It catalyses the reaction L-threonyl-[protein] + ATP = O-phospho-L-threonyl-[protein] + ADP + H(+). The protein is Serine/threonine-protein kinase pdik1l-A (pdik1-a) of Xenopus laevis (African clawed frog).